A 612-amino-acid chain; its full sequence is Isocitrate dehydrogenase kinase/phosphatase (612 aa).

ATP-binding positions include alanine 327 to leucine 333 and lysine 348. Residue aspartate 383 is part of the active site. The interval alanine 593–alanine 612 is disordered.

Belongs to the AceK family.

Its subcellular location is the cytoplasm. The catalysed reaction is L-seryl-[isocitrate dehydrogenase] + ATP = O-phospho-L-seryl-[isocitrate dehydrogenase] + ADP + H(+). Its function is as follows. Bifunctional enzyme which can phosphorylate or dephosphorylate isocitrate dehydrogenase (IDH) on a specific serine residue. This is a regulatory mechanism which enables bacteria to bypass the Krebs cycle via the glyoxylate shunt in response to the source of carbon. When bacteria are grown on glucose, IDH is fully active and unphosphorylated, but when grown on acetate or ethanol, the activity of IDH declines drastically concomitant with its phosphorylation. The protein is Isocitrate dehydrogenase kinase/phosphatase of Paraburkholderia xenovorans (strain LB400).